The sequence spans 203 residues: Large ribosomal subunit protein bL25 (203 aa).

The protein belongs to the bacterial ribosomal protein bL25 family. CTC subfamily. In terms of assembly, part of the 50S ribosomal subunit; part of the 5S rRNA/L5/L18/L25 subcomplex. Contacts the 5S rRNA. Binds to the 5S rRNA independently of L5 and L18.

In terms of biological role, this is one of the proteins that binds to the 5S RNA in the ribosome where it forms part of the central protuberance. The polypeptide is Large ribosomal subunit protein bL25 (Cellvibrio japonicus (strain Ueda107) (Pseudomonas fluorescens subsp. cellulosa)).